The following is a 62-amino-acid chain: Large ribosomal subunit protein bL28 (62 aa).

Positions 1–24 (MARKCVITGRKTKAGNNRSHAMNS) are disordered. A compositionally biased stretch (polar residues) spans 14-24 (AGNNRSHAMNS).

The protein belongs to the bacterial ribosomal protein bL28 family.

The protein is Large ribosomal subunit protein bL28 of Bacillus pumilus (strain SAFR-032).